The chain runs to 583 residues: Protein translocase subunit SecD (583 aa).

The next 6 helical transmembrane spans lie at 7–27, 419–439, 446–468, 469–489, 511–531, and 538–558; these read FGVV…TLQW, LVWG…EAGV, LLNL…LSSI, AGMI…FERI, FWAI…LSVL, and GFAY…LFVS.

The protein belongs to the SecD/SecF family. SecD subfamily. In terms of assembly, forms a complex with SecF. Part of the essential Sec protein translocation apparatus which comprises SecA, SecYEG and auxiliary proteins SecDF. Other proteins may also be involved.

Its subcellular location is the cell inner membrane. Part of the Sec protein translocase complex. Interacts with the SecYEG preprotein conducting channel. SecDF uses the proton motive force (PMF) to complete protein translocation after the ATP-dependent function of SecA. This Treponema pallidum (strain Nichols) protein is Protein translocase subunit SecD.